Consider the following 291-residue polypeptide: MTRSYIPLNSLRAFEAAARHLSFTRAAIELNVTHSAISQHVKSLEQQLNCQLFVRGSRGLMLTTEGESLLPVLNDSFDRMAGMLDRFATKQTQEKLKIGVVGTFAIGCLFPLLSDFKRSYPHIDLHISTHNNRVDPAAEGLDYTIRYGGGAWHDTDAQYLCSALMSPLCSPTLASQIQTPADILKFPLLRSYRRDEWALWMQAAGEAPPSPTHNVMVFDSSVTMLEAAQGGMGVAIAPVRMFTHLLSSERIVQPFLTQIDLGSYWITRLQSRPETPAMREFSRWLTGVLHK.

In terms of domain architecture, HTH lysR-type spans 6–63 (IPLNSLRAFEAAARHLSFTRAAIELNVTHSAISQHVKSLEQQLNCQLFVRGSRGLMLT). Residues 23–42 (FTRAAIELNVTHSAISQHVK) constitute a DNA-binding region (H-T-H motif).

The protein belongs to the LysR transcriptional regulatory family.

Its subcellular location is the cytoplasm. Its function is as follows. Regulates the expression of the beta-lactamase gene. Represses cephalosporinase (AmpC) in the presence of beta-lactams and induces it in the absence of them. This chain is HTH-type transcriptional activator AmpR (ampR), found in Citrobacter freundii.